The following is a 620-amino-acid chain: Glutathione-regulated potassium-efflux system protein KefC (620 aa).

Helical transmembrane passes span 4 to 24 (HTLI…PIAV), 26 to 46 (LGLG…PWGL), 54 to 74 (SILH…GLEL), 90 to 110 (GALQ…LLGL), 114 to 134 (VAEL…MQAM), 149 to 169 (FAVL…IPLL), 178 to 198 (MGAF…VVLL), 218 to 238 (VFSA…EEVG), 270 to 290 (GLLL…GTLI), 294 to 314 (LRIV…LWLI), 327 to 347 (WFAV…GAAQ), and 359 to 379 (SLTL…VILN). In terms of domain architecture, RCK N-terminal spans 399-518 (QPRVIIAGFG…AGVEKPERET (120 aa)). The tract at residues 597-620 (GWQGTEEGKHTGNMADEPETKPSS) is disordered.

It belongs to the monovalent cation:proton antiporter 2 (CPA2) transporter (TC 2.A.37) family. KefC subfamily. In terms of assembly, homodimer. Interacts with the regulatory subunit KefF.

It localises to the cell inner membrane. Pore-forming subunit of a potassium efflux system that confers protection against electrophiles. Catalyzes K(+)/H(+) antiport. The sequence is that of Glutathione-regulated potassium-efflux system protein KefC from Escherichia coli O45:K1 (strain S88 / ExPEC).